The primary structure comprises 212 residues: Imidazole glycerol phosphate synthase subunit HisH 2 (212 aa).

One can recognise a Glutamine amidotransferase type-1 domain in the interval 3–212; that stretch reads RVAIIDYGIN…LMSNFLQWNP (210 aa). Catalysis depends on Cys82, which acts as the Nucleophile. Residues His192 and Glu194 contribute to the active site.

In terms of assembly, heterodimer of HisH and HisF.

It localises to the cytoplasm. The catalysed reaction is 5-[(5-phospho-1-deoxy-D-ribulos-1-ylimino)methylamino]-1-(5-phospho-beta-D-ribosyl)imidazole-4-carboxamide + L-glutamine = D-erythro-1-(imidazol-4-yl)glycerol 3-phosphate + 5-amino-1-(5-phospho-beta-D-ribosyl)imidazole-4-carboxamide + L-glutamate + H(+). It carries out the reaction L-glutamine + H2O = L-glutamate + NH4(+). The protein operates within amino-acid biosynthesis; L-histidine biosynthesis; L-histidine from 5-phospho-alpha-D-ribose 1-diphosphate: step 5/9. Its function is as follows. IGPS catalyzes the conversion of PRFAR and glutamine to IGP, AICAR and glutamate. The HisH subunit provides the glutamine amidotransferase activity that produces the ammonia necessary to HisF for the synthesis of IGP and AICAR. The sequence is that of Imidazole glycerol phosphate synthase subunit HisH 2 from Nitrobacter winogradskyi (strain ATCC 25391 / DSM 10237 / CIP 104748 / NCIMB 11846 / Nb-255).